A 533-amino-acid chain; its full sequence is Subtilisin-like protease 1 (533 aa).

The N-terminal stretch at 1 to 19 is a signal peptide; it reads MGVFRFISISLAAVSAANA. A propeptide spanning residues 20–116 is cleaved from the precursor; sequence AQILSMPHAQ…VEPDTIISVH (97 aa). In terms of domain architecture, Inhibitor I9 spans 34-115; sequence SYIVMMKDDT…FVEPDTIISV (82 aa). Residues 126–400 enclose the Peptidase S8 domain; sequence SWGLARISNP…NVLINNGGAK (275 aa). Active-site charge relay system residues include aspartate 158 and histidine 190. A disordered region spans residues 175 to 198; sequence GSNQVNDGDDRDGSGHGTHTSGTM. 2 N-linked (GlcNAc...) asparagine glycosylation sites follow: asparagine 233 and asparagine 251. Positions 282–294 are enriched in polar residues; sequence NDNQDAQSSSPAS. Positions 282-312 are disordered; that stretch reads NDNQDAQSSSPASEPSVCTVGSSAEDDSRSS. Serine 345 serves as the catalytic Charge relay system. Residues 378–394 are compositionally biased toward polar residues; the sequence is TSSITDAGPGTPTNVLI. Residues 378 to 512 are disordered; sequence TSSITDAGPG…YPGGDNFDFD (135 aa). Positions 405 to 470 are enriched in pro residues; the sequence is NPNPAPSPSP…FPGEPFPGEP (66 aa). Residues 471-487 show a composition bias toward low complexity; that stretch reads FPGESFPGESFPGESAP. Over residues 488-502 the composition is skewed to pro residues; it reads APAPMPPSPQHPHTP.

This sequence belongs to the peptidase S8 family.

It localises to the secreted. In terms of biological role, secreted subtilisin-like serine protease with keratinolytic activity that contributes to pathogenicity. This chain is Subtilisin-like protease 1 (SUB1), found in Arthroderma benhamiae (strain ATCC MYA-4681 / CBS 112371) (Trichophyton mentagrophytes).